Reading from the N-terminus, the 304-residue chain is Acetaldehyde dehydrogenase 4 (304 aa).

The active-site Acyl-thioester intermediate is the Cys-131. NAD(+) contacts are provided by residues 162 to 170 (SAGPGTRKN) and Asn-273.

The protein belongs to the acetaldehyde dehydrogenase family. In terms of assembly, heterotetramer composed of two BphI (aldolase) and two BphJ (dehydrogenase).

It catalyses the reaction acetaldehyde + NAD(+) + CoA = acetyl-CoA + NADH + H(+). It carries out the reaction propanal + NAD(+) + CoA = propanoyl-CoA + NADH + H(+). It functions in the pathway xenobiotic degradation; polychlorinated biphenyl degradation. Its activity is regulated as follows. Bound pyruvate or other intermediates in the aldol addition reaction catalyzed by BphI allosterically activates BphJ reductive deacylation activity. In terms of biological role, catalyzes the conversion of acetaldehyde or propanal to acetyl-CoA or propanoyl-CoA, respectively, using NAD(+) and coenzyme A. Displays broad specificity since it can utilize aliphatic aldehydes from two to five carbons in length as substrates; the aldehyde substrates can be directly channeled from the aldolase BphI to the dehydrogenase BphJ. Is the final enzyme in the meta-cleavage pathway for the degradation of polychlorinated biphenyls (PCBs). Is also able to utilize NADP(+) instead of NAD(+). Is not active with succinic semialdehyde or picolinaldehyde as substrates. Can also catalyze the reverse reaction, i.e. the reductive deacylation of acetyl-CoA to acetaldehyde, which is then channeled to the BphI active site. The BphI-BphJ enzyme complex exhibits unique bidirectionality in substrate channeling and allosteric activation. The chain is Acetaldehyde dehydrogenase 4 (bphJ) from Paraburkholderia xenovorans (strain LB400).